The chain runs to 868 residues: Homeobox-leucine zipper protein HOX29 (868 aa).

Residues 9–72 (DASKYVRYTP…NRRCREKQRK (64 aa)) constitute a DNA-binding region (homeobox). Positions 64-106 (RRCREKQRKESSRLQALNRKLTAMNKLLMEENDRLQKQVSQLV) form a coiled coil. The segment at 150-171 (VTSGHHHQQQQHNVVQPPPRDA) is disordered. Residues 169 to 397 (RDASPAGLMS…VAHEDTRSVI (229 aa)) enclose the START domain.

This sequence belongs to the HD-ZIP homeobox family. Class III subfamily. Expressed in phloem.

It is found in the nucleus. In terms of biological role, probable transcription factor that may be necessary for the proper patterning of vascular bundles. This chain is Homeobox-leucine zipper protein HOX29 (HOX29), found in Oryza sativa subsp. japonica (Rice).